Here is a 272-residue protein sequence, read N- to C-terminus: GEM-like protein 5 (272 aa).

The interval 1 to 42 (MTGSQEDQPKIIIDQEQPKTLETEHQPEPSSSSPDQKKWGTH) is disordered. Residues 16 to 27 (EQPKTLETEHQP) are compositionally biased toward basic and acidic residues. The 79-residue stretch at 143 to 221 (SLFRQIFGTE…ANVATVNPVV (79 aa)) folds into the GRAM domain.

The protein belongs to the GEM family.

In Arabidopsis thaliana (Mouse-ear cress), this protein is GEM-like protein 5.